Consider the following 749-residue polypeptide: Taperin (749 aa).

A disordered region spans residues 144 to 348; sequence PAAPCRRGSP…IRPSSKPDME (205 aa). 3 stretches are compositionally biased toward polar residues: residues 169-179, 230-239, and 250-266; these read SAATRTPTNRS, LQKTGSNSFT, and VNRS…SPTG. A Phosphoserine modification is found at serine 274. The span at 323–335 shows a compositional bias: polar residues; that stretch reads QRQWVSSATSAND. Residues 337-347 are compositionally biased toward basic and acidic residues; it reads FEIRPSSKPDM. Phosphoserine is present on residues serine 401, serine 457, and serine 501. Disordered stretches follow at residues 502-586, 636-673, and 730-749; these read EEEA…TTLE, FEYP…SEKP, and LTPA…ALYF. 2 stretches are compositionally biased toward polar residues: residues 534–544 and 558–570; these read ELLNRGSNTFT and HLSQ…QQGA. Acidic residues predominate over residues 647-668; the sequence is EEAEEEEEEEGEEDGEEEEVGP.

It belongs to the taperin family. Interacts with GRXCR2; the interaction restricts TPRN to the stereocilum basal region. Interacts with actin ACTB; the interaction may stabilize stereocilia. Interacts with CLIC5. Interacts with PTPRQ. TPRN, CLIC5 and PTPQR form concentric rings at the base of stereocilia and may form a complex. Interacts with phosphatase PPP1CA; the interaction results in inhibition of PPP1CA phosphatase activity. Interacts with DNA damage response proteins XRCC6/KU70, XRCC5/KU80, PARP1, TOP1 and TOP2A; these interactions recruit TPRN to sites of DNA damage where it may play a role in DNA repair. As to expression, in the organ of Corti, expressed in the inner ear hair cell stereocilia and the supporting cells (at protein level). Expressed in the sensory epithelia of the organ of Corti and vestibular end organs and, to a lesser extent, in Reisner's membrane and the spiral ligament (at protein level). At postnatal day 2, expression is detected in cochlea, liver, brain, kidney, heart and lung.

Its subcellular location is the cell projection. It is found in the stereocilium. It localises to the microvillus. The protein resides in the nucleus. The protein localises to the nucleoplasm. Its subcellular location is the cytoplasm. Its function is as follows. Essential for hearing. Required for maintenance of stereocilia on both inner and outer hair cells. Necessary for the integrity of the stereociliary rootlet. May act as an actin cytoskeleton regulator involved in the regulation of actin dynamics at the pointed end in hair cells. Forms rings at the base of stereocilia and binds actin filaments in the stereocilia which may stabilize the stereocilia. Acts as a strong inhibitor of PPP1CA phosphatase activity. Recruited to sites of DNA damage and may play a role in DNA damage repair. This is Taperin (Tprn) from Mus musculus (Mouse).